Reading from the N-terminus, the 208-residue chain is Uracil phosphoribosyltransferase (208 aa).

Residues arginine 78, arginine 103, and 130 to 138 each bind 5-phospho-alpha-D-ribose 1-diphosphate; that span reads DPMLATGGT. Residues isoleucine 193 and 198–200 each bind uracil; that span reads GDA. Aspartate 199 contacts 5-phospho-alpha-D-ribose 1-diphosphate.

This sequence belongs to the UPRTase family. Mg(2+) serves as cofactor.

It catalyses the reaction UMP + diphosphate = 5-phospho-alpha-D-ribose 1-diphosphate + uracil. Its pathway is pyrimidine metabolism; UMP biosynthesis via salvage pathway; UMP from uracil: step 1/1. Allosterically activated by GTP. Functionally, catalyzes the conversion of uracil and 5-phospho-alpha-D-ribose 1-diphosphate (PRPP) to UMP and diphosphate. The sequence is that of Uracil phosphoribosyltransferase from Desulfotalea psychrophila (strain LSv54 / DSM 12343).